The primary structure comprises 349 residues: Anthranilate phosphoribosyltransferase (349 aa).

5-phospho-alpha-D-ribose 1-diphosphate contacts are provided by residues glycine 82, 85–86 (GD), 92–95 (NVST), 110–118 (KHGNRAVSG), and serine 122. Glycine 82 is a binding site for anthranilate. Residue serine 94 coordinates Mg(2+). Asparagine 113 contributes to the anthranilate binding site. Arginine 168 lines the anthranilate pocket. Mg(2+) is bound by residues aspartate 227 and glutamate 228.

This sequence belongs to the anthranilate phosphoribosyltransferase family. Homodimer. Mg(2+) serves as cofactor.

The enzyme catalyses N-(5-phospho-beta-D-ribosyl)anthranilate + diphosphate = 5-phospho-alpha-D-ribose 1-diphosphate + anthranilate. The protein operates within amino-acid biosynthesis; L-tryptophan biosynthesis; L-tryptophan from chorismate: step 2/5. In terms of biological role, catalyzes the transfer of the phosphoribosyl group of 5-phosphorylribose-1-pyrophosphate (PRPP) to anthranilate to yield N-(5'-phosphoribosyl)-anthranilate (PRA). This Pseudomonas savastanoi pv. phaseolicola (strain 1448A / Race 6) (Pseudomonas syringae pv. phaseolicola (strain 1448A / Race 6)) protein is Anthranilate phosphoribosyltransferase.